Consider the following 336-residue polypeptide: MDLTIPKDYDPRLSIRETEAAIRYIRETFQDEFGKELNLQRMSAPMFVEKSTGLNDNLNGVEQPVSFEMKDMPNETVEIVHSLAKWKRLALKRYGFGMHEGLYTNMNAIRKEEDLDNFHSIYVDQWDWEKIISKDERTEETLKDTVRDIFKVIKHMEHEVWYKFPQAVYHLPDEIHFVTTQELEDRWPDLTPLEREDKIAKELGAVFVMKIGDKLQRSGKPHDGRAPDYDDWSLNGDIIFWYEPLQRRIEVSSMGIRVSPESMKYQLEQADATDREKLPFHKMLLNGELPYTIGGGIGQSRLCMLLLGKAHIGEVQASIWPEDMIKKCEENHIQIL.

It belongs to the class-II aminoacyl-tRNA synthetase family. AsnA subfamily.

The protein resides in the cytoplasm. The enzyme catalyses L-aspartate + NH4(+) + ATP = L-asparagine + AMP + diphosphate + H(+). The protein operates within amino-acid biosynthesis; L-asparagine biosynthesis; L-asparagine from L-aspartate (ammonia route): step 1/1. This is Aspartate--ammonia ligase from Limosilactobacillus reuteri (strain DSM 20016) (Lactobacillus reuteri).